The chain runs to 361 residues: Holliday junction branch migration complex subunit RuvB (361 aa).

2 stretches are compositionally biased toward polar residues: residues 1-15 (MAIKRSGNNNLSPNV) and 28-40 (ERSTSPELEQQEA). Residues 1–41 (MAIKRSGNNNLSPNVKSDLLSPEVIPQERSTSPELEQQEAS) are disordered. Residues 13–203 (PNVKSDLLSP…FGLIQRLRFY (191 aa)) form a large ATPase domain (RuvB-L) region. Residues Leu42, Arg43, Gly84, Lys87, Thr88, Thr89, 150–152 (EDF), Arg193, Tyr203, and Arg240 each bind ATP. Mg(2+) is bound at residue Thr88. The segment at 204-274 (EVDELQQIIL…LASEALDLYQ (71 aa)) is small ATPAse domain (RuvB-S). A head domain (RuvB-H) region spans residues 277-361 (KRGLDWTDRL…PTPLLPWKES (85 aa)). Positions 332 and 337 each coordinate DNA.

The protein belongs to the RuvB family. As to quaternary structure, homohexamer. Forms an RuvA(8)-RuvB(12)-Holliday junction (HJ) complex. HJ DNA is sandwiched between 2 RuvA tetramers; dsDNA enters through RuvA and exits via RuvB. An RuvB hexamer assembles on each DNA strand where it exits the tetramer. Each RuvB hexamer is contacted by two RuvA subunits (via domain III) on 2 adjacent RuvB subunits; this complex drives branch migration. In the full resolvosome a probable DNA-RuvA(4)-RuvB(12)-RuvC(2) complex forms which resolves the HJ.

Its subcellular location is the cytoplasm. It catalyses the reaction ATP + H2O = ADP + phosphate + H(+). In terms of biological role, the RuvA-RuvB-RuvC complex processes Holliday junction (HJ) DNA during genetic recombination and DNA repair, while the RuvA-RuvB complex plays an important role in the rescue of blocked DNA replication forks via replication fork reversal (RFR). RuvA specifically binds to HJ cruciform DNA, conferring on it an open structure. The RuvB hexamer acts as an ATP-dependent pump, pulling dsDNA into and through the RuvAB complex. RuvB forms 2 homohexamers on either side of HJ DNA bound by 1 or 2 RuvA tetramers; 4 subunits per hexamer contact DNA at a time. Coordinated motions by a converter formed by DNA-disengaged RuvB subunits stimulates ATP hydrolysis and nucleotide exchange. Immobilization of the converter enables RuvB to convert the ATP-contained energy into a lever motion, pulling 2 nucleotides of DNA out of the RuvA tetramer per ATP hydrolyzed, thus driving DNA branch migration. The RuvB motors rotate together with the DNA substrate, which together with the progressing nucleotide cycle form the mechanistic basis for DNA recombination by continuous HJ branch migration. Branch migration allows RuvC to scan DNA until it finds its consensus sequence, where it cleaves and resolves cruciform DNA. Functionally, participates in UV-tolerance of Synechocystis PCC 6803. The chain is Holliday junction branch migration complex subunit RuvB from Synechocystis sp. (strain ATCC 27184 / PCC 6803 / Kazusa).